A 353-amino-acid chain; its full sequence is Phospho-N-acetylmuramoyl-pentapeptide-transferase (353 aa).

10 helical membrane passes run 22 to 42 (FAFF…ITWA), 65 to 85 (TPTM…LFCI), 88 to 108 (DNIF…IGLI), 129 to 149 (LLAQ…SSEL), 161 to 181 (PLFD…ISSS), 192 to 212 (GLAT…LYLS), 228 to 248 (GLGE…GFLW), 256 to 276 (VFMG…LAVI), 281 to 301 (ILLL…ILQV), and 330 to 350 (KIIV…LASI).

Belongs to the glycosyltransferase 4 family. MraY subfamily. Mg(2+) is required as a cofactor.

Its subcellular location is the cell inner membrane. It catalyses the reaction UDP-N-acetyl-alpha-D-muramoyl-L-alanyl-gamma-D-glutamyl-meso-2,6-diaminopimeloyl-D-alanyl-D-alanine + di-trans,octa-cis-undecaprenyl phosphate = di-trans,octa-cis-undecaprenyl diphospho-N-acetyl-alpha-D-muramoyl-L-alanyl-D-glutamyl-meso-2,6-diaminopimeloyl-D-alanyl-D-alanine + UMP. It functions in the pathway cell wall biogenesis; peptidoglycan biosynthesis. Functionally, catalyzes the initial step of the lipid cycle reactions in the biosynthesis of the cell wall peptidoglycan: transfers peptidoglycan precursor phospho-MurNAc-pentapeptide from UDP-MurNAc-pentapeptide onto the lipid carrier undecaprenyl phosphate, yielding undecaprenyl-pyrophosphoryl-MurNAc-pentapeptide, known as lipid I. This is Phospho-N-acetylmuramoyl-pentapeptide-transferase from Campylobacter jejuni subsp. jejuni serotype O:2 (strain ATCC 700819 / NCTC 11168).